A 390-amino-acid chain; its full sequence is HIT domain-containing protein DDB_G0272839 (390 aa).

The interval 168–201 is disordered; sequence DNENEKEKEKEMELDNDNTNTESIPPITSKSTST. A compositionally biased stretch (low complexity) spans 184–201; it reads DNTNTESIPPITSKSTST. The HIT domain maps to 232–343; sequence YFCNKPESFL…ISNDYNTKYL (112 aa).

This Dictyostelium discoideum (Social amoeba) protein is HIT domain-containing protein DDB_G0272839.